The chain runs to 905 residues: Gamma-tubulin complex component 2 (905 aa).

At Tyr83 the chain carries Phosphotyrosine. The segment at 877–905 (AERSQKAAPQVPVPRGPSAPAPRVAIPAQ) is disordered. A compositionally biased stretch (pro residues) spans 887–896 (VPVPRGPSAP).

This sequence belongs to the TUBGCP family. Component of the gamma-tubulin ring complex (gTuRC) consisting of TUBGCP2, TUBGCP3, TUBGCP4, TUBGCP5 and TUBGCP6 and gamma-tubulin TUBG1 or TUBG2. TUBGCP2, TUBGCP3, TUBGCP4, TUBGCP5 and TUBGCP6 assemble in a 5:5:2:1:1 stoichiometry; each is associated with a gamma-tubulin, thereby arranging 14 gamma-tubulins in a helical manner. Gamma-tubulin at the first position is blocked by TUBGCP3 at the last position, allowing 13 protafilaments to grow into a microtubule. The gTuRC (via TUBGCP3 and TUBGCP6) interacts with ACTB and MZT1; the interactions form a luminal bridge that stabilizes the initial structure during complex assembly. The gTuRC (via TUBGCP2) interacts with MZT2A/MZT2B and CDK5RAP2 (via CM1 motif); the interactions play a role in gTuRC activation. Interacts with ATF5; the ATF5:PCNT:polyglutamylated tubulin (PGT) tripartite unites the mother centriole and the pericentriolar material (PCM) in the centrosome.

The protein localises to the cytoplasm. The protein resides in the cytoskeleton. It localises to the microtubule organizing center. Its subcellular location is the centrosome. Functionally, component of the gamma-tubulin ring complex (gTuRC) which mediates microtubule nucleation. The gTuRC regulates the minus-end nucleation of alpha-beta tubulin heterodimers that grow into microtubule protafilaments, a critical step in centrosome duplication and spindle formation. Plays a role in neuronal migration. The protein is Gamma-tubulin complex component 2 (Tubgcp2) of Mus musculus (Mouse).